A 519-amino-acid chain; its full sequence is Molybdate transporter 1 (519 aa).

The next 7 membrane-spanning stretches (helical) occupy residues 98–118, 164–184, 370–390, 412–432, 436–456, 464–484, and 485–505; these read LLHA…SQAI, LGTE…ATTL, AVAL…AMPC, ILLG…LVVL, FPQP…ASVV, GYTF…TGTG, and FLVG…VAAA.

This sequence belongs to the SLC26A/SulP transporter (TC 2.A.53) family.

It localises to the membrane. 60% inhibition by 20 uM tungstate or by lack of glucose in the medium, but no inhibition by sulfate. Its function is as follows. High affinity molybdate transporter. Acts through an energy-dependent process. This Chlamydomonas reinhardtii (Chlamydomonas smithii) protein is Molybdate transporter 1 (MOT1).